A 475-amino-acid polypeptide reads, in one-letter code: Dihydrolipoyl dehydrogenase (475 aa).

FAD contacts are provided by residues 36–45, Lys-54, and Gly-117; that span reads ERYNTLGGVC. A disulfide bond links Cys-45 and Cys-50. Residues 182–186, Glu-205, Val-238, and 270–273 each bind NAD(+); these read GGGII and AIGR. 2 residues coordinate FAD: Asp-313 and Ala-321. His-445 (proton acceptor) is an active-site residue.

Belongs to the class-I pyridine nucleotide-disulfide oxidoreductase family. The cofactor is FAD.

The protein resides in the cytoplasm. The catalysed reaction is N(6)-[(R)-dihydrolipoyl]-L-lysyl-[protein] + NAD(+) = N(6)-[(R)-lipoyl]-L-lysyl-[protein] + NADH + H(+). Functionally, the branched-chain alpha-keto dehydrogenase complex catalyzes the overall conversion of alpha-keto acids to acyl-CoA and CO(2). It contains multiple copies of 3 enzymatic components: branched-chain alpha-keto acid decarboxylase (E1), lipoamide acyltransferase (E2) and lipoamide dehydrogenase (E3). This Vibrio cholerae serotype O1 (strain ATCC 39315 / El Tor Inaba N16961) protein is Dihydrolipoyl dehydrogenase (lpd).